The chain runs to 308 residues: Glycine-rich protein GRP33 (308 aa).

In terms of domain architecture, KH spans 83–118 (DQFPKYNFLGKLLGPGGSTMKQLQDETMTKISILGR). 2 stretches are compositionally biased toward gly residues: residues 203–220 (GPMG…GGFS) and 273–294 (RGAG…GGGK). 2 disordered regions span residues 203–222 (GPMG…FSGP) and 270–308 (SPGR…AAPY).

Post-translationally, the arginines in the Gly-rich domain might be methylated.

The polypeptide is Glycine-rich protein GRP33 (Artemia salina (Brine shrimp)).